A 68-amino-acid polypeptide reads, in one-letter code: Metallothionein (68 aa).

Positions 7, 9, 14, 16, 20, 22, 25, 27, 35, 39, 40, 42, 43, 47, 50, 54, 56, 64, 66, and 67 each coordinate a divalent metal cation.

It belongs to the metallothionein superfamily. Type 1 family.

In terms of biological role, metallothioneins have a high content of cysteine residues that bind various heavy metals. This is Metallothionein (mt) from Scyliorhinus torazame (Cloudy catshark).